The sequence spans 351 residues: N-terminal EF-hand calcium-binding protein 1 (351 aa).

Ser4 is subject to Phosphoserine. EF-hand domains lie at Lys26 to Ser61 and Leu60 to Glu95. Residues Asp39, Asn41, Asp43, Lys45, and Glu50 each contribute to the Ca(2+) site. A coiled-coil region spans residues Leu135–Gln163. The interval Gly180 to Ser203 is disordered. The span at His190–Val202 shows a compositional bias: polar residues. Phosphoserine is present on residues Ser192 and Ser197. Residues Glu209–Tyr275 are a coiled coil. The ABM domain occupies Met252–Met340.

As to quaternary structure, interacts with STX1. May interact with CPNE6. In terms of tissue distribution, expressed in brain (at protein level).

The protein resides in the cytoplasm. This is N-terminal EF-hand calcium-binding protein 1 (NECAB1) from Homo sapiens (Human).